The primary structure comprises 100 residues: Large ribosomal subunit protein uL23 (100 aa).

Belongs to the universal ribosomal protein uL23 family. As to quaternary structure, part of the 50S ribosomal subunit. Contacts protein L29, and trigger factor when it is bound to the ribosome.

One of the early assembly proteins it binds 23S rRNA. One of the proteins that surrounds the polypeptide exit tunnel on the outside of the ribosome. Forms the main docking site for trigger factor binding to the ribosome. This chain is Large ribosomal subunit protein uL23, found in Thermotoga neapolitana (strain ATCC 49049 / DSM 4359 / NBRC 107923 / NS-E).